Reading from the N-terminus, the 494-residue chain is Lysine--tRNA ligase (494 aa).

Residues Glu-399 and Glu-406 each coordinate Mg(2+).

This sequence belongs to the class-II aminoacyl-tRNA synthetase family. Mg(2+) is required as a cofactor.

It is found in the cytoplasm. It carries out the reaction tRNA(Lys) + L-lysine + ATP = L-lysyl-tRNA(Lys) + AMP + diphosphate. This chain is Lysine--tRNA ligase (lysS), found in Saccharolobus solfataricus (strain ATCC 35092 / DSM 1617 / JCM 11322 / P2) (Sulfolobus solfataricus).